A 468-amino-acid polypeptide reads, in one-letter code: 3-isopropylmalate dehydratase large subunit (468 aa).

Cys-349, Cys-409, and Cys-412 together coordinate [4Fe-4S] cluster.

Belongs to the aconitase/IPM isomerase family. LeuC type 1 subfamily. In terms of assembly, heterodimer of LeuC and LeuD. The cofactor is [4Fe-4S] cluster.

The catalysed reaction is (2R,3S)-3-isopropylmalate = (2S)-2-isopropylmalate. It participates in amino-acid biosynthesis; L-leucine biosynthesis; L-leucine from 3-methyl-2-oxobutanoate: step 2/4. In terms of biological role, catalyzes the isomerization between 2-isopropylmalate and 3-isopropylmalate, via the formation of 2-isopropylmaleate. This is 3-isopropylmalate dehydratase large subunit from Nitrobacter hamburgensis (strain DSM 10229 / NCIMB 13809 / X14).